We begin with the raw amino-acid sequence, 215 residues long: Redox-sensing transcriptional repressor Rex (215 aa).

The segment at residues 18-57 (LYYRFLKNLHASGKQRVSSAELSDAVKVDSATIRRDFSYF) is a DNA-binding region (H-T-H motif). 92–97 (GVGNLG) is a binding site for NAD(+).

This sequence belongs to the transcriptional regulatory Rex family. In terms of assembly, homodimer.

Its subcellular location is the cytoplasm. Modulates transcription in response to changes in cellular NADH/NAD(+) redox state. The chain is Redox-sensing transcriptional repressor Rex from Bacillus subtilis (strain 168).